We begin with the raw amino-acid sequence, 211 residues long: Putative truncated flagellar export/assembly protein LafU (211 aa).

Residues 58-176 (LRVLIKDDQN…RIEIMVLTKS (119 aa)) form the OmpA-like domain.

The protein belongs to the MotB family.

This Escherichia coli (strain K12) protein is Putative truncated flagellar export/assembly protein LafU.